Here is a 330-residue protein sequence, read N- to C-terminus: Membrane-associated protein VIPP1, chloroplastic (330 aa).

A chloroplast-targeting transit peptide spans 1 to 64 (MALKASPVTG…LRLACDNRLR (64 aa)). Coiled-coil stretches lie at residues 124–259 (SQKQ…LTQI) and 312–329 (KDSE…KAND). Residues 287–312 (LSGSSKKGELPPGRSTVAASTRYPFK) form a disordered region.

This sequence belongs to the PspA/Vipp/IM30 family. Homomultimer. Complex formation involves interaction via the central alpha-helical domain (71-286).

The protein resides in the plastid. The protein localises to the chloroplast inner membrane. Its subcellular location is the chloroplast thylakoid membrane. Functionally, required for plastid vesicle formation and thylakoid membrane biogenesis, but not for functional assembly of thylakoid protein complexes. The protein is Membrane-associated protein VIPP1, chloroplastic of Arabidopsis thaliana (Mouse-ear cress).